The chain runs to 211 residues: uncharacterized protein (211 aa).

The next 4 helical transmembrane spans lie at 77 to 97 (FLMF…AITI), 113 to 133 (GISV…VLIG), 152 to 172 (ILIS…NVIP), and 179 to 199 (LLTP…PLFG).

The protein localises to the cell membrane. This is an uncharacterized protein from Bacillus subtilis (strain 168).